The following is a 210-amino-acid chain: MADNWGSENVVADAAPATEAPEVALFGKWSLQSVNVSDISLVDYIPVKEKSAKYLPHSAGRFQVRRFRKAACPIVERLANSLMMHGRNNGKKLMTVRIVKHAFEIIYLLTGENPVQVLVNAVINSGPREDSTRIGRAGTVRRQAVDVAPLRRVNQAIWLLCTGAREAAFRNVKTIAECLADELINAAKGSSNSYAIKKKDELERVAKSNR.

The protein belongs to the universal ribosomal protein uS7 family. Component of the small ribosomal subunit. Part of the small subunit (SSU) processome, composed of more than 70 proteins and the RNA chaperone small nucleolar RNA (snoRNA) U3.

Its subcellular location is the cytoplasm. The protein localises to the nucleus. It localises to the nucleolus. Component of the small ribosomal subunit. The ribosome is a large ribonucleoprotein complex responsible for the synthesis of proteins in the cell. Part of the small subunit (SSU) processome, first precursor of the small eukaryotic ribosomal subunit. During the assembly of the SSU processome in the nucleolus, many ribosome biogenesis factors, an RNA chaperone and ribosomal proteins associate with the nascent pre-rRNA and work in concert to generate RNA folding, modifications, rearrangements and cleavage as well as targeted degradation of pre-ribosomal RNA by the RNA exosome. The protein is Small ribosomal subunit protein uS7 (rps-5) of Caenorhabditis elegans.